The following is a 121-amino-acid chain: Large ribosomal subunit protein uL18 (121 aa).

The segment covering 1–22 (MIKKPDKKTLRQGKHKRVRRKV) has biased composition (basic residues). Residues 1 to 23 (MIKKPDKKTLRQGKHKRVRRKVA) form a disordered region.

The protein belongs to the universal ribosomal protein uL18 family. Part of the 50S ribosomal subunit; part of the 5S rRNA/L5/L18/L25 subcomplex. Contacts the 5S and 23S rRNAs.

In terms of biological role, this is one of the proteins that bind and probably mediate the attachment of the 5S RNA into the large ribosomal subunit, where it forms part of the central protuberance. The chain is Large ribosomal subunit protein uL18 from Syntrophomonas wolfei subsp. wolfei (strain DSM 2245B / Goettingen).